Reading from the N-terminus, the 227-residue chain is Cytochrome c oxidase subunit 2 (227 aa).

Residues 1-14 (MAYPFQLGLQDATS) lie on the Mitochondrial intermembrane side of the membrane. Residues 15-45 (PIMEELTNFHDHTLMIVFLISSLVLYIISLM) form a helical membrane-spanning segment. Residues 46–59 (LTTKLTHTSTMDAQ) are Mitochondrial matrix-facing. Residues 60-87 (EVETIWTILPAAILVLIALPSLRILYMM) traverse the membrane as a helical segment. The Mitochondrial intermembrane segment spans residues 88-227 (DEINNPALTV…YFENWSASMI (140 aa)). Histidine 161, cysteine 196, glutamate 198, cysteine 200, histidine 204, and methionine 207 together coordinate Cu cation. Glutamate 198 provides a ligand contact to Mg(2+). Tyrosine 218 carries the post-translational modification Phosphotyrosine.

The protein belongs to the cytochrome c oxidase subunit 2 family. As to quaternary structure, component of the cytochrome c oxidase (complex IV, CIV), a multisubunit enzyme composed of 14 subunits. The complex is composed of a catalytic core of 3 subunits MT-CO1, MT-CO2 and MT-CO3, encoded in the mitochondrial DNA, and 11 supernumerary subunits COX4I, COX5A, COX5B, COX6A, COX6B, COX6C, COX7A, COX7B, COX7C, COX8 and NDUFA4, which are encoded in the nuclear genome. The complex exists as a monomer or a dimer and forms supercomplexes (SCs) in the inner mitochondrial membrane with NADH-ubiquinone oxidoreductase (complex I, CI) and ubiquinol-cytochrome c oxidoreductase (cytochrome b-c1 complex, complex III, CIII), resulting in different assemblies (supercomplex SCI(1)III(2)IV(1) and megacomplex MCI(2)III(2)IV(2)). Found in a complex with TMEM177, COA6, COX18, COX20, SCO1 and SCO2. Interacts with TMEM177 in a COX20-dependent manner. Interacts with COX20. Interacts with COX16. The cofactor is Cu cation.

The protein resides in the mitochondrion inner membrane. It carries out the reaction 4 Fe(II)-[cytochrome c] + O2 + 8 H(+)(in) = 4 Fe(III)-[cytochrome c] + 2 H2O + 4 H(+)(out). Component of the cytochrome c oxidase, the last enzyme in the mitochondrial electron transport chain which drives oxidative phosphorylation. The respiratory chain contains 3 multisubunit complexes succinate dehydrogenase (complex II, CII), ubiquinol-cytochrome c oxidoreductase (cytochrome b-c1 complex, complex III, CIII) and cytochrome c oxidase (complex IV, CIV), that cooperate to transfer electrons derived from NADH and succinate to molecular oxygen, creating an electrochemical gradient over the inner membrane that drives transmembrane transport and the ATP synthase. Cytochrome c oxidase is the component of the respiratory chain that catalyzes the reduction of oxygen to water. Electrons originating from reduced cytochrome c in the intermembrane space (IMS) are transferred via the dinuclear copper A center (CU(A)) of subunit 2 and heme A of subunit 1 to the active site in subunit 1, a binuclear center (BNC) formed by heme A3 and copper B (CU(B)). The BNC reduces molecular oxygen to 2 water molecules using 4 electrons from cytochrome c in the IMS and 4 protons from the mitochondrial matrix. The sequence is that of Cytochrome c oxidase subunit 2 (MT-CO2) from Rhabdomys pumilio (Four-striped grass mouse).